The primary structure comprises 412 residues: Divalent metal cation transporter MntH (412 aa).

The Cytoplasmic portion of the chain corresponds to 1-19 (MTNYRVESSSGRAARKMRL). A helical membrane pass occupies residues 20–39 (ALMGPAFIAAIGYIDPGNFA). The Periplasmic segment spans residues 40–51 (TNIQAGASFGYQ). Residues 52 to 71 (LLWVVVWANLMAMLIQILSA) traverse the membrane as a helical segment. Over 72–95 (KLGIATGKNLAEQIRDHYPRPVVW) the chain is Cytoplasmic. The helical transmembrane segment at 96 to 118 (FYWVQAEIIAMATDLAEFIGAAI) threads the bilayer. The Periplasmic portion of the chain corresponds to 119-125 (GFKLILG). A helical transmembrane segment spans residues 126-145 (VSLLQGAVLTGIATFLILML). Over 146 to 155 (QRRGQKPLEK) the chain is Cytoplasmic. A helical transmembrane segment spans residues 156-175 (VIGGLLLFVAAAYIVELIFS). Over 176–196 (QPNLAQLGKGMVIPSLPTSEA) the chain is Periplasmic. Residues 197-220 (VFLAAGVLGATIMPHVIYLHSSLT) form a helical membrane-spanning segment. Over 221-238 (QHLHGGSRQQRYSATKWD) the chain is Cytoplasmic. The chain crosses the membrane as a helical span at residues 239–258 (VAIAMTIAGFVNLVMMATAA). The Periplasmic portion of the chain corresponds to 259-276 (AAFHFSGHTGVADLDEAY). A helical membrane pass occupies residues 277–297 (LTLQPLLSHAAATVFGLSLVA). Residues 298–327 (AGLSSTVVGTLAGQVVMQGFIRFHIPLWVR) lie on the Cytoplasmic side of the membrane. The helical transmembrane segment at 328 to 344 (RTVTMLPSFIVILMGLD) threads the bilayer. Residues 345–350 (PTRILV) are Periplasmic-facing. Residues 351–370 (MSQVLLSFGIALALVPLLIF) traverse the membrane as a helical segment. Residues 371–387 (TSDSKLMGDLVNSKRVK) are Cytoplasmic-facing. A helical membrane pass occupies residues 388–406 (QTGWVIVVLVVALNIWLLV). Topologically, residues 407 to 412 (GTALGL) are periplasmic.

It belongs to the NRAMP family.

Its subcellular location is the cell inner membrane. In terms of biological role, h(+)-stimulated, divalent metal cation uptake system. This Shigella flexneri serotype 5b (strain 8401) protein is Divalent metal cation transporter MntH.